The primary structure comprises 455 residues: Chromosomal replication initiator protein DnaA (455 aa).

The tract at residues 1-74 is domain I, interacts with DnaA modulators; that stretch reads MFDIEKFWQH…IQSAYGYAGI (74 aa). The domain II stretch occupies residues 74 to 117; the sequence is IEILPVFQINENNDSPERIVTPEPRYAIQLQQEKRAHKQFTKNL. Residues 118–334 form a domain III, AAA+ region region; it reads KLNEKYTFDN…GALVKVQAYA (217 aa). Positions 162, 164, 165, and 166 each coordinate ATP. The segment at 335-455 is domain IV, binds dsDNA; it reads TIERADINVN…VFDLKQMIEH (121 aa).

It belongs to the DnaA family. Oligomerizes as a right-handed, spiral filament on DNA at oriC.

It is found in the cytoplasm. In terms of biological role, plays an essential role in the initiation and regulation of chromosomal replication. ATP-DnaA binds to the origin of replication (oriC) to initiate formation of the DNA replication initiation complex once per cell cycle. Binds the DnaA box (a 9 base pair repeat at the origin) and separates the double-stranded (ds)DNA. Forms a right-handed helical filament on oriC DNA; dsDNA binds to the exterior of the filament while single-stranded (ss)DNA is stabiized in the filament's interior. The ATP-DnaA-oriC complex binds and stabilizes one strand of the AT-rich DNA unwinding element (DUE), permitting loading of DNA polymerase. After initiation quickly degrades to an ADP-DnaA complex that is not apt for DNA replication. Binds acidic phospholipids. The chain is Chromosomal replication initiator protein DnaA from Lactobacillus helveticus (strain DPC 4571).